The chain runs to 489 residues: UDP-N-acetylmuramate--L-alanine ligase (489 aa).

Residue 128–134 (GTHGKTT) participates in ATP binding.

This sequence belongs to the MurCDEF family.

The protein localises to the cytoplasm. The catalysed reaction is UDP-N-acetyl-alpha-D-muramate + L-alanine + ATP = UDP-N-acetyl-alpha-D-muramoyl-L-alanine + ADP + phosphate + H(+). Its pathway is cell wall biogenesis; peptidoglycan biosynthesis. In terms of biological role, cell wall formation. In Shewanella sediminis (strain HAW-EB3), this protein is UDP-N-acetylmuramate--L-alanine ligase.